A 107-amino-acid polypeptide reads, in one-letter code: UPF0145 protein Sfri_2095 (107 aa).

This sequence belongs to the UPF0145 family.

This Shewanella frigidimarina (strain NCIMB 400) protein is UPF0145 protein Sfri_2095.